A 359-amino-acid chain; its full sequence is tRNA N6-adenosine threonylcarbamoyltransferase (359 aa).

Residues H115 and H119 each contribute to the Fe cation site. Residues 137 to 141, D170, G183, and N283 each bind substrate; that span reads LVSGG. Position 311 (D311) interacts with Fe cation. The segment at 328–359 is disordered; it reads APDSLDLAPRSRWPLDEKSAPLIGTGRRGAKA.

This sequence belongs to the KAE1 / TsaD family. The cofactor is Fe(2+).

It localises to the cytoplasm. It catalyses the reaction L-threonylcarbamoyladenylate + adenosine(37) in tRNA = N(6)-L-threonylcarbamoyladenosine(37) in tRNA + AMP + H(+). Its function is as follows. Required for the formation of a threonylcarbamoyl group on adenosine at position 37 (t(6)A37) in tRNAs that read codons beginning with adenine. Is involved in the transfer of the threonylcarbamoyl moiety of threonylcarbamoyl-AMP (TC-AMP) to the N6 group of A37, together with TsaE and TsaB. TsaD likely plays a direct catalytic role in this reaction. The sequence is that of tRNA N6-adenosine threonylcarbamoyltransferase from Brucella anthropi (strain ATCC 49188 / DSM 6882 / CCUG 24695 / JCM 21032 / LMG 3331 / NBRC 15819 / NCTC 12168 / Alc 37) (Ochrobactrum anthropi).